We begin with the raw amino-acid sequence, 126 residues long: Regulatory protein MgsR (126 aa).

The cysteines at positions 13 and 16 are disulfide-linked.

Belongs to the ArsC family.

The protein localises to the cytoplasm. Its activity is regulated as follows. Activity is controlled at multiple levels. Regulation includes a positive autoregulatory loop on mgsR transcription and a post-translational redox-sensitive activation step by an intramolecular disulfide bond formation in response to ethanol stress. In addition, protein stability is strictly controlled by rapid proteolytic degradation by the ClpXP and ClpCP proteases. The McsB protein-arginine kinase might serve as a proteolytic adapter for the ClpX ATPase in the degradation mechanism of MgsR. Its function is as follows. Regulates transcription of a subregulon within the general stress response. Exerts positive and negative effects in response to ethanol stress. In Bacillus subtilis (strain 168), this protein is Regulatory protein MgsR.